The following is a 607-amino-acid chain: Coronin-like protein cor-1 (607 aa).

WD repeat units lie at residues 77-117, 127-167, and 170-209; these read AHKA…LNRN, GHQK…ALLE, and GHPD…VVHE. A disordered region spans residues 415–564; the sequence is PTAAESVPTQ…VSAASDVGHV (150 aa). The span at 424-436 shows a compositional bias: low complexity; sequence QSYSERPPSSQQP. The span at 437 to 447 shows a compositional bias: pro residues; sequence SPRPSASPRPR. 2 stretches are compositionally biased toward basic and acidic residues: residues 473–489 and 517–533; these read SRTE…DPMK and AAAE…RTAD. Low complexity predominate over residues 544–559; sequence SSRASASPRGSVSAAS. Residues 563 to 602 adopt a coiled-coil conformation; the sequence is HVPQNMDELLEDLMKMKAVLRQHERRIRMLEEEIADRNMS.

This sequence belongs to the WD repeat coronin family.

It is found in the cytoplasm. Its subcellular location is the cytoskeleton. Functionally, required to direct the migration of Q neuroblasts along the anterior axis of the body during larval development. This is dependent on its asymmetric expression in Q neuroblasts. This is Coronin-like protein cor-1 (cor-1) from Caenorhabditis elegans.